The following is a 656-amino-acid chain: Kinesin-related protein SMY1 (656 aa).

Positions 27 to 364 constitute a Kinesin motor domain; it reads HIEVILRAIP…LEFGDSIRQI (338 aa). Residue 114–121 coordinates ATP; that stretch reads GPSFSGKS. A Phosphothreonine modification is found at T583.

Belongs to the TRAFAC class myosin-kinesin ATPase superfamily. Kinesin family.

The protein localises to the cytoplasm. It is found in the cytoskeleton. Possible microtubule-based motor that can interact or substitute with myosin 2 (MYO2). This Saccharomyces cerevisiae (strain ATCC 204508 / S288c) (Baker's yeast) protein is Kinesin-related protein SMY1 (SMY1).